The primary structure comprises 111 residues: Large ribosomal subunit protein uL23 (111 aa).

This sequence belongs to the universal ribosomal protein uL23 family. As to quaternary structure, part of the 50S ribosomal subunit. Contacts protein L29, and trigger factor when it is bound to the ribosome.

Its function is as follows. One of the early assembly proteins it binds 23S rRNA. One of the proteins that surrounds the polypeptide exit tunnel on the outside of the ribosome. Forms the main docking site for trigger factor binding to the ribosome. The chain is Large ribosomal subunit protein uL23 from Chlamydia trachomatis serovar A (strain ATCC VR-571B / DSM 19440 / HAR-13).